Consider the following 447-residue polypeptide: Dimethylsulfoniopropionate lyase DddP (447 aa).

The tract at residues 1-26 (MNRHFNATRKIDPSRGATLGDGSPND) is disordered. Residues Asp-295, Asp-297, Asp-307, His-371, Glu-406, and Glu-421 each contribute to the a divalent metal cation site.

Belongs to the peptidase M24B family. As to quaternary structure, homodimer. A divalent metal cation serves as cofactor.

It carries out the reaction S,S-dimethyl-beta-propiothetin = acrylate + dimethyl sulfide + H(+). Its function is as follows. Able to cleave dimethylsulfoniopropionate (DMSP), releasing dimethyl sulfide (DMS). DMS is the principal form by which sulfur is transported from oceans to the atmosphere. The real activity of the protein is however subject to debate and it is unclear whether it constitutes a real dimethylsulfoniopropionate lyase in vivo: the low activity with DMSP as substrate suggests that DMSP is not its native substrate. This Roseobacter denitrificans (strain ATCC 33942 / OCh 114) (Erythrobacter sp. (strain OCh 114)) protein is Dimethylsulfoniopropionate lyase DddP.